A 459-amino-acid polypeptide reads, in one-letter code: AGFKAGVKDYKLTYYTPDYETKDTDILAAFRVTPQPGVPPEEAGAAVAAESSTGTWTTVWTDGLTSLDRYKGRCYHIETVVGEENQYIAYVAYPLDLFEEGSVTNMFTSIVGNVFGFKALRALRLEDLRIPPSYSKTFQGPPHGIQVERDKLNKYGRPLLGCTIKPKLGLSAKNYGRAVYECLRGGLDFTKDDENVNSQPFMRWRDRFLFCTEAIYKAQTETGEIKGHYLNATAGTCEEMMKRAIFARELGVPIIMHDYLTGGFTANTSLAHYCRDNGLLLHIHRAMHAVIDRQKNHGMHFRVLAKALRMSGGDHIHGGTVVGKLEGEREMTLGFVDLLRDDFIEKDRSRGIFFTQDWVSMPGVIPVASGGIHVWHMPALTEIFGDDSVLQFGGGTLGHPWGNAPGAVANRVALEACVQARNEGRDLAREGNEIIREASKWSPELAAACEVWKEIKFDF.

The residue at position 4 (K4) is an N6,N6,N6-trimethyllysine. Substrate is bound by residues N113 and T163. K165 functions as the Proton acceptor in the catalytic mechanism. Substrate is bound at residue K167. The Mg(2+) site is built by K191, D193, and E194. Position 191 is an N6-carboxylysine (K191). H284 functions as the Proton acceptor in the catalytic mechanism. The substrate site is built by R285, H317, and S369.

This sequence belongs to the RuBisCO large chain family. Type I subfamily. In terms of assembly, heterohexadecamer of 8 large chains and 8 small chains; disulfide-linked. The disulfide link is formed within the large subunit homodimers. Mg(2+) is required as a cofactor. The disulfide bond which can form in the large chain dimeric partners within the hexadecamer appears to be associated with oxidative stress and protein turnover.

The protein localises to the plastid. Its subcellular location is the chloroplast. The enzyme catalyses 2 (2R)-3-phosphoglycerate + 2 H(+) = D-ribulose 1,5-bisphosphate + CO2 + H2O. The catalysed reaction is D-ribulose 1,5-bisphosphate + O2 = 2-phosphoglycolate + (2R)-3-phosphoglycerate + 2 H(+). In terms of biological role, ruBisCO catalyzes two reactions: the carboxylation of D-ribulose 1,5-bisphosphate, the primary event in carbon dioxide fixation, as well as the oxidative fragmentation of the pentose substrate in the photorespiration process. Both reactions occur simultaneously and in competition at the same active site. The sequence is that of Ribulose bisphosphate carboxylase large chain from Nypa fruticans (Nypa palm).